The following is a 243-amino-acid chain: Eukaryotic translation initiation factor 4E-2 (243 aa).

Belongs to the eukaryotic initiation factor 4E family. EIF4F is a multi-subunit complex, the composition of which varies with external and internal environmental conditions. It is composed of at least eIF4A, eIF4E and eIF4G. eIF4E is also known to interact with other partners.

In terms of biological role, recognizes and binds the 7-methylguanosine-containing mRNA cap during an early step in the initiation of protein synthesis and facilitates ribosome binding by inducing the unwinding of the mRNAs secondary structures. In Schizosaccharomyces pombe (strain 972 / ATCC 24843) (Fission yeast), this protein is Eukaryotic translation initiation factor 4E-2 (tif452).